The sequence spans 441 residues: Glutamyl-tRNA reductase (441 aa).

Residues 49 to 52 (TCNR), serine 109, 114 to 116 (EDQ), and glutamine 120 contribute to the substrate site. Cysteine 50 serves as the catalytic Nucleophile. Residue 190-195 (GAGKMS) coordinates NADP(+).

It belongs to the glutamyl-tRNA reductase family. Homodimer.

The enzyme catalyses (S)-4-amino-5-oxopentanoate + tRNA(Glu) + NADP(+) = L-glutamyl-tRNA(Glu) + NADPH + H(+). The protein operates within porphyrin-containing compound metabolism; protoporphyrin-IX biosynthesis; 5-aminolevulinate from L-glutamyl-tRNA(Glu): step 1/2. In terms of biological role, catalyzes the NADPH-dependent reduction of glutamyl-tRNA(Glu) to glutamate 1-semialdehyde (GSA). This is Glutamyl-tRNA reductase from Moorella thermoacetica (strain ATCC 39073 / JCM 9320).